A 95-amino-acid chain; its full sequence is Co-chaperonin GroES (95 aa).

The protein belongs to the GroES chaperonin family. Heptamer of 7 subunits arranged in a ring. Interacts with the chaperonin GroEL.

It is found in the cytoplasm. In terms of biological role, together with the chaperonin GroEL, plays an essential role in assisting protein folding. The GroEL-GroES system forms a nano-cage that allows encapsulation of the non-native substrate proteins and provides a physical environment optimized to promote and accelerate protein folding. GroES binds to the apical surface of the GroEL ring, thereby capping the opening of the GroEL channel. In Oleidesulfovibrio alaskensis (strain ATCC BAA-1058 / DSM 17464 / G20) (Desulfovibrio alaskensis), this protein is Co-chaperonin GroES.